The sequence spans 85 residues: uncharacterized protein (85 aa).

Transmembrane regions (helical) follow at residues W16 to L34 and L50 to F71.

It to E.coli YhdT.

It localises to the cell membrane. This is an uncharacterized protein from Haemophilus influenzae (strain ATCC 51907 / DSM 11121 / KW20 / Rd).